The sequence spans 176 residues: COA8 family protein CG14806, mitochondrial (176 aa).

Residues 1 to 23 (MNKCFRCQPRISLFQFSLPRCYA) constitute a mitochondrion transit peptide.

The protein belongs to the COA8 family.

It localises to the mitochondrion inner membrane. In terms of biological role, may be required for cytochrome c complex (COX) assembly and function, COX being the terminal component of the mitochondrial respiratory chain. Its function is as follows. (Microbial infection) Required for optimal replication of E.chaffeensis. The protein is COA8 family protein CG14806, mitochondrial of Drosophila melanogaster (Fruit fly).